A 540-amino-acid chain; its full sequence is MTQNSLPSWSSLQTHYDKIRDAHMRDWFAPENDPAPTRAERFAFAGGGLAADFSKNRITEETLKLLVQVAREAGVEKRRDAMFAGDIVNPTEGRAVLHTALRATDPKAPFYAQVQAERKKMAVFADQVRSGEWKGYTGKRIRYVVNIGIGGSDLGPKMVVHALHHLATPEITTHFVSNVDGADLYNVMQQIDPEETLAIIVSKTFTTLETMTNARSLRDWFIEKGCPESALAKHFVGVSANPAEVVKFGIAKENVFEMWDWVGGRYSLWSAVGLSIMIAIGPKQFDELLAGANEMDQHFRDAPLEKNLPVLLGMIGIWYRNFFGSQSYLVAPYSQALHFLPSYLQQLEMESNGKSARLDGAMVDYPTAAVTWGEPGTNGQHAFFQMLHQGPTIVPIDFIAVLTPEHPLVSHHPKLLANCFAQSEALMVGRTLEEAKKVAGADKPELAPHLVFPGNRPTTTLLVDALTARSLGALIALYEHKVLVQGTVWNINSFDQWGVELGKILGKVVEADLTAPSADVKKHDSSTSALIARARAALKK.

Glutamate 350 serves as the catalytic Proton donor. Catalysis depends on residues histidine 381 and lysine 503.

It belongs to the GPI family.

It is found in the cytoplasm. It catalyses the reaction alpha-D-glucose 6-phosphate = beta-D-fructose 6-phosphate. The protein operates within carbohydrate biosynthesis; gluconeogenesis. Its pathway is carbohydrate degradation; glycolysis; D-glyceraldehyde 3-phosphate and glycerone phosphate from D-glucose: step 2/4. Functionally, catalyzes the reversible isomerization of glucose-6-phosphate to fructose-6-phosphate. The polypeptide is Glucose-6-phosphate isomerase (Paraburkholderia phytofirmans (strain DSM 17436 / LMG 22146 / PsJN) (Burkholderia phytofirmans)).